The following is a 35-amino-acid chain: Photosystem II reaction center protein T (35 aa).

A helical membrane pass occupies residues 3–23; that stretch reads ALVYTFLLVSTLGIIFFAIFF.

It belongs to the PsbT family. PSII is composed of 1 copy each of membrane proteins PsbA, PsbB, PsbC, PsbD, PsbE, PsbF, PsbH, PsbI, PsbJ, PsbK, PsbL, PsbM, PsbT, PsbY, PsbZ, Psb30/Ycf12, at least 3 peripheral proteins of the oxygen-evolving complex and a large number of cofactors. It forms dimeric complexes.

The protein localises to the plastid. It localises to the chloroplast thylakoid membrane. In terms of biological role, found at the monomer-monomer interface of the photosystem II (PS II) dimer, plays a role in assembly and dimerization of PSII. PSII is a light-driven water plastoquinone oxidoreductase, using light energy to abstract electrons from H(2)O, generating a proton gradient subsequently used for ATP formation. In Pinus thunbergii (Japanese black pine), this protein is Photosystem II reaction center protein T.